A 152-amino-acid polypeptide reads, in one-letter code: Large ribosomal subunit protein uL13 (152 aa).

Belongs to the universal ribosomal protein uL13 family. Part of the 50S ribosomal subunit.

This protein is one of the early assembly proteins of the 50S ribosomal subunit, although it is not seen to bind rRNA by itself. It is important during the early stages of 50S assembly. This chain is Large ribosomal subunit protein uL13, found in Wolbachia pipientis subsp. Culex pipiens (strain wPip).